We begin with the raw amino-acid sequence, 417 residues long: Calreticulin (417 aa).

The first 17 residues, 1-17 (MLLSVPLLLGLLGLAVA), serve as a signal peptide directing secretion. Residues 18–197 (EPAVYFKEQF…NSQVESGSLE (180 aa)) form an N-domain region. Glutamine 26 is a binding site for Ca(2+). Lysine 48 is subject to N6-acetyllysine. Ca(2+) is bound by residues lysine 62 and lysine 64. At lysine 64 the chain carries N6-(2-hydroxyisobutyryl)lysine. Residues cysteine 105 and cysteine 137 are joined by a disulfide bond. Tyrosine 109, lysine 111, tyrosine 128, and aspartate 135 together coordinate an alpha-D-glucoside. Lysine 159 carries the N6-acetyllysine modification. The 1-1 repeat unit spans residues 191–202 (VESGSLEDDWDF). The segment at 191-255 (VESGSLEDDW…DAKKPEDWDE (65 aa)) is 4 X approximate repeats. The disordered stretch occupies residues 193–278 (SGSLEDDWDF…PEYKGEWKPR (86 aa)). The segment at 198–308 (DDWDFLPPKK…YSPDPSIYAY (111 aa)) is P-domain. The segment covering 207 to 251 (KIKDPDASKPEDWDERAKIDDPTDSKPEDWDKPEHIPDPDAKKPE) has biased composition (basic and acidic residues). At lysine 209 the chain carries N6-acetyllysine. Repeat copies occupy residues 210-221 (DPDASKPEDWDE), 227-238 (DPTDSKPEDWDK), 244-255 (DPDAKKPEDWDE), 259-269 (GEWEPPVIQNP), 273-283 (GEWKPRQIDNP), and 287-297 (GTWIHPEIDNP). Residues 237 to 270 (DKPEHIPDPDAKKPEDWDEEMDGEWEPPVIQNPE) are interaction with PPIB. The segment covering 252–261 (DWDEEMDGEW) has biased composition (acidic residues). A 3 X approximate repeats region spans residues 259-297 (GEWEPPVIQNPEYKGEWKPRQIDNPDYKGTWIHPEIDNP). The tract at residues 309 to 417 (DNFGVLGLDL…DVPGQAKDEL (109 aa)) is C-domain. Aspartate 317 contributes to the an alpha-D-glucoside binding site. Aspartate 328 is a Ca(2+) binding site. N-linked (GlcNAc...) asparagine glycosylation occurs at asparagine 344. The interval 350–417 (TKAAEKQMKD…DVPGQAKDEL (68 aa)) is disordered. Basic and acidic residues predominate over residues 352–379 (AAEKQMKDKQDEEQRLKEEEEDKKRKEE). The segment covering 380-409 (EEAEDKEDDEDKDEDEEDEEDKEEDEEEDV) has biased composition (acidic residues). The Prevents secretion from ER signature appears at 414–417 (KDEL).

This sequence belongs to the calreticulin family. As to quaternary structure, monomer. Component of an EIF2 complex at least composed of CELF1/CUGBP1, CALR, CALR3, EIF2S1, EIF2S2, HSP90B1 and HSPA5. Interacts with PDIA3/ERp57 and SPACA9. Interacts with TRIM21. Interacts with NR3C1. Interacts with PPIB. Interacts (via P-domain) with PDIA5. Interacts with GABARAP. Interacts with HLA-E-B2M and HLA-G-B2M complexes. Interacts with HLA-F. Interacts with CLCC1.

The protein resides in the endoplasmic reticulum lumen. It localises to the cytoplasm. It is found in the cytosol. The protein localises to the secreted. Its subcellular location is the extracellular space. The protein resides in the extracellular matrix. It localises to the cell surface. It is found in the sarcoplasmic reticulum lumen. The protein localises to the cytoplasmic vesicle. Its subcellular location is the secretory vesicle. The protein resides in the cortical granule. It localises to the cytolytic granule. Calcium-binding chaperone that promotes folding, oligomeric assembly and quality control in the endoplasmic reticulum (ER) via the calreticulin/calnexin cycle. This lectin interacts transiently with almost all of the monoglucosylated glycoproteins that are synthesized in the ER. Interacts with the DNA-binding domain of NR3C1 and mediates its nuclear export. Involved in maternal gene expression regulation. May participate in oocyte maturation via the regulation of calcium homeostasis. Present in the cortical granules of non-activated oocytes, is exocytosed during the cortical reaction in response to oocyte activation and might participate in the block to polyspermy. The protein is Calreticulin of Homo sapiens (Human).